Here is a 77-residue protein sequence, read N- to C-terminus: Acyl carrier protein (77 aa).

The Carrier domain maps to 2–77 (SSIDKRIKEI…DAIDYITDHT (76 aa)). An O-(pantetheine 4'-phosphoryl)serine modification is found at S37.

It belongs to the acyl carrier protein (ACP) family. In terms of processing, 4'-phosphopantetheine is transferred from CoA to a specific serine of apo-ACP by AcpS. This modification is essential for activity because fatty acids are bound in thioester linkage to the sulfhydryl of the prosthetic group.

Its subcellular location is the cytoplasm. The protein operates within lipid metabolism; fatty acid biosynthesis. Its function is as follows. Carrier of the growing fatty acid chain in fatty acid biosynthesis. This chain is Acyl carrier protein, found in Geotalea daltonii (strain DSM 22248 / JCM 15807 / FRC-32) (Geobacter daltonii).